A 170-amino-acid polypeptide reads, in one-letter code: Small ribosomal subunit protein bS18c (170 aa).

2 disordered regions span residues 1-60 and 149-170; these read MYTS…GPGD and NRNL…SSDC. 7 repeats span residues 4–10, 11–17, 18–24, 25–31, 32–38, 39–45, and 46–52; these read SKQPFLK, SKQPFSK, SEQPFSK, SEQPFRK, SKQTFRK, FKQPFRK, and SKQPFRR. Residues 4–52 form a 7 X 7 AA tandem repeats region; the sequence is SKQPFLKSKQPFSKSEQPFSKSEQPFRKSKQTFRKFKQPFRKSKQPFRR. Residues 13–26 are compositionally biased toward polar residues; that stretch reads QPFSKSEQPFSKSE. A compositionally biased stretch (basic residues) spans 30-55; it reads RKSKQTFRKFKQPFRKSKQPFRRRPR.

This sequence belongs to the bacterial ribosomal protein bS18 family. In terms of assembly, part of the 30S ribosomal subunit.

It is found in the plastid. Its subcellular location is the chloroplast. This Secale cereale (Rye) protein is Small ribosomal subunit protein bS18c (rps18).